We begin with the raw amino-acid sequence, 588 residues long: 2-succinyl-5-enolpyruvyl-6-hydroxy-3-cyclohexene-1-carboxylate synthase (588 aa).

The protein belongs to the TPP enzyme family. MenD subfamily. In terms of assembly, homodimer. Mg(2+) serves as cofactor. Requires Mn(2+) as cofactor. It depends on thiamine diphosphate as a cofactor.

The enzyme catalyses isochorismate + 2-oxoglutarate + H(+) = 5-enolpyruvoyl-6-hydroxy-2-succinyl-cyclohex-3-ene-1-carboxylate + CO2. It participates in quinol/quinone metabolism; 1,4-dihydroxy-2-naphthoate biosynthesis; 1,4-dihydroxy-2-naphthoate from chorismate: step 2/7. It functions in the pathway cofactor biosynthesis; phylloquinone biosynthesis. Its function is as follows. Catalyzes the thiamine diphosphate-dependent decarboxylation of 2-oxoglutarate and the subsequent addition of the resulting succinic semialdehyde-thiamine pyrophosphate anion to isochorismate to yield 2-succinyl-5-enolpyruvyl-6-hydroxy-3-cyclohexene-1-carboxylate (SEPHCHC). The sequence is that of 2-succinyl-5-enolpyruvyl-6-hydroxy-3-cyclohexene-1-carboxylate synthase from Prochlorococcus marinus (strain MIT 9515).